The following is a 381-amino-acid chain: 8-amino-7-oxononanoate synthase (381 aa).

Arginine 27 is a binding site for substrate. 105-106 serves as a coordination point for pyridoxal 5'-phosphate; sequence GY. Histidine 130 is a substrate binding site. Pyridoxal 5'-phosphate is bound by residues serine 176, 201–204, and 232–235; these read DEAH and TLSK. Lysine 235 bears the N6-(pyridoxal phosphate)lysine mark. Threonine 345 is a binding site for substrate.

It belongs to the class-II pyridoxal-phosphate-dependent aminotransferase family. BioF subfamily. In terms of assembly, homodimer. It depends on pyridoxal 5'-phosphate as a cofactor.

The catalysed reaction is 6-carboxyhexanoyl-[ACP] + L-alanine + H(+) = (8S)-8-amino-7-oxononanoate + holo-[ACP] + CO2. It participates in cofactor biosynthesis; biotin biosynthesis. Its function is as follows. Catalyzes the decarboxylative condensation of pimeloyl-[acyl-carrier protein] and L-alanine to produce 8-amino-7-oxononanoate (AON), [acyl-carrier protein], and carbon dioxide. The chain is 8-amino-7-oxononanoate synthase from Mycobacterium avium (strain 104).